Reading from the N-terminus, the 257-residue chain is Thiazole synthase (257 aa).

Lysine 96 serves as the catalytic Schiff-base intermediate with DXP. 1-deoxy-D-xylulose 5-phosphate is bound by residues glycine 157, 184 to 185, and 206 to 207; these read AG and NT.

Belongs to the ThiG family. As to quaternary structure, homotetramer. Forms heterodimers with either ThiH or ThiS.

It is found in the cytoplasm. It carries out the reaction [ThiS sulfur-carrier protein]-C-terminal-Gly-aminoethanethioate + 2-iminoacetate + 1-deoxy-D-xylulose 5-phosphate = [ThiS sulfur-carrier protein]-C-terminal Gly-Gly + 2-[(2R,5Z)-2-carboxy-4-methylthiazol-5(2H)-ylidene]ethyl phosphate + 2 H2O + H(+). It participates in cofactor biosynthesis; thiamine diphosphate biosynthesis. In terms of biological role, catalyzes the rearrangement of 1-deoxy-D-xylulose 5-phosphate (DXP) to produce the thiazole phosphate moiety of thiamine. Sulfur is provided by the thiocarboxylate moiety of the carrier protein ThiS. In vitro, sulfur can be provided by H(2)S. This chain is Thiazole synthase, found in Agrobacterium fabrum (strain C58 / ATCC 33970) (Agrobacterium tumefaciens (strain C58)).